The chain runs to 328 residues: tRNA uridine(34) hydroxylase (328 aa).

The Rhodanese domain occupies 130–224 (LDEDTVVLDT…YGKDPEVQGE (95 aa)). The active-site Cysteine persulfide intermediate is cysteine 184.

Belongs to the TrhO family.

It carries out the reaction uridine(34) in tRNA + AH2 + O2 = 5-hydroxyuridine(34) in tRNA + A + H2O. Catalyzes oxygen-dependent 5-hydroxyuridine (ho5U) modification at position 34 in tRNAs. The protein is tRNA uridine(34) hydroxylase of Streptococcus agalactiae serotype Ia (strain ATCC 27591 / A909 / CDC SS700).